The following is a 231-amino-acid chain: Ion-translocating oxidoreductase complex subunit E (231 aa).

6 consecutive transmembrane segments (helical) span residues Ala18–Ala38, Leu39–Leu59, Thr63–Val83, Leu86–Val106, Ala125–Leu145, and Pro182–Gly202.

Belongs to the NqrDE/RnfAE family. As to quaternary structure, the complex is composed of six subunits: RsxA, RsxB, RsxC, RsxD, RsxE and RsxG.

Its subcellular location is the cell inner membrane. Part of a membrane-bound complex that couples electron transfer with translocation of ions across the membrane. Required to maintain the reduced state of SoxR. This is Ion-translocating oxidoreductase complex subunit E from Escherichia coli (strain ATCC 8739 / DSM 1576 / NBRC 3972 / NCIMB 8545 / WDCM 00012 / Crooks).